Here is a 91-residue protein sequence, read N- to C-terminus: PqqA binding protein 1 (91 aa).

Belongs to the PqqD family. In terms of assembly, monomer. Interacts with PqqE.

It functions in the pathway cofactor biosynthesis; pyrroloquinoline quinone biosynthesis. In terms of biological role, functions as a PqqA binding protein and presents PqqA to PqqE, in the pyrroloquinoline quinone (PQQ) biosynthetic pathway. The protein is PqqA binding protein 1 (pqqD1) of Pseudomonas putida (strain ATCC 47054 / DSM 6125 / CFBP 8728 / NCIMB 11950 / KT2440).